The sequence spans 133 residues: Small ribosomal subunit protein uS15 (133 aa).

The protein belongs to the universal ribosomal protein uS15 family. In terms of assembly, part of the 30S ribosomal subunit.

The sequence is that of Small ribosomal subunit protein uS15 from Methanosphaera stadtmanae (strain ATCC 43021 / DSM 3091 / JCM 11832 / MCB-3).